The primary structure comprises 185 residues: Potassium-transporting ATPase KdpC subunit (185 aa).

The helical transmembrane segment at 8 to 28 (LGLVLIMFVLCGFIFPLTVTA) threads the bilayer. Residues 113–132 (GQKLSSDAVTTSGSGLDPDI) form a disordered region. Residues 114-126 (QKLSSDAVTTSGS) are compositionally biased toward polar residues.

The protein belongs to the KdpC family. The system is composed of three essential subunits: KdpA, KdpB and KdpC.

The protein localises to the cell membrane. Functionally, part of the high-affinity ATP-driven potassium transport (or Kdp) system, which catalyzes the hydrolysis of ATP coupled with the electrogenic transport of potassium into the cytoplasm. This subunit acts as a catalytic chaperone that increases the ATP-binding affinity of the ATP-hydrolyzing subunit KdpB by the formation of a transient KdpB/KdpC/ATP ternary complex. In Staphylococcus haemolyticus (strain JCSC1435), this protein is Potassium-transporting ATPase KdpC subunit.